A 565-amino-acid polypeptide reads, in one-letter code: Deoxyribodipyrimidine photo-lyase, mitochondrial (565 aa).

A Photolyase/cryptochrome alpha/beta domain is found at 75–226 (STVMHWFRND…QLKYYHDSCI (152 aa)). FAD is bound by residues Y326 and 338–342 (TSGLS). 2 interaction with DNA regions span residues 384-391 (EVAWRDFY) and 451-452 (NR). Residue 482–484 (DGD) participates in FAD binding. Q514 is a binding site for DNA.

It belongs to the DNA photolyase class-1 family. In terms of assembly, monomer. Requires FAD as cofactor. (6R)-5,10-methylene-5,6,7,8-tetrahydrofolate is required as a cofactor.

Its subcellular location is the nucleus. It localises to the mitochondrion. The enzyme catalyses cyclobutadipyrimidine (in DNA) = 2 pyrimidine residues (in DNA).. Its function is as follows. Involved in repair of UV radiation-induced DNA damage. Catalyzes the light-dependent monomerization (300-600 nm) of cyclobutyl pyrimidine dimers (in cis-syn configuration), which are formed between adjacent bases on the same DNA strand upon exposure to ultraviolet radiation. The protein is Deoxyribodipyrimidine photo-lyase, mitochondrial (PHR1) of Saccharomyces cerevisiae (strain ATCC 204508 / S288c) (Baker's yeast).